Here is a 148-residue protein sequence, read N- to C-terminus: Large ribosomal subunit protein uL11 (148 aa).

Residues 89–108 (EKKKGSGAHKPGKEKVGQVT) are disordered.

It belongs to the universal ribosomal protein uL11 family. Part of the ribosomal stalk of the 50S ribosomal subunit. Interacts with L10 and the large rRNA to form the base of the stalk. L10 forms an elongated spine to which L12 dimers bind in a sequential fashion forming a multimeric L10(L12)X complex. In terms of processing, one or more lysine residues are methylated.

In terms of biological role, forms part of the ribosomal stalk which helps the ribosome interact with GTP-bound translation factors. This chain is Large ribosomal subunit protein uL11, found in Anaeromyxobacter dehalogenans (strain 2CP-1 / ATCC BAA-258).